The chain runs to 618 residues: Cell pattern formation-associated protein STU1 (618 aa).

Over residues 13–28 (MSAGPTQQPPTVTSYN) the composition is skewed to polar residues. The tract at residues 13–105 (MSAGPTQQPP…FDTSGQIAPP (93 aa)) is disordered. The segment covering 48 to 59 (YGGYPYTNGMPS) has biased composition (low complexity). Polar residues predominate over residues 91–101 (NQYSGFDTSGQ). The HTH APSES-type domain occupies 110 to 216 (RVTATLWEDE…HNISALLYHP (107 aa)). Residues 144–165 (GTKLLNVAGMTRGRRDGILKSE) constitute a DNA-binding region (H-T-H motif). 2 disordered regions span residues 229-355 (AERR…YDGS) and 390-618 (SEMG…SRRR). Composition is skewed to polar residues over residues 256–266 (MSQNGSQSLSG), 284–298 (TSAS…SDSF), 305–326 (AMSN…TRSM), and 336–355 (GSTL…YDGS). Residues 438-451 (DHEHDPEYTHDSRT) are compositionally biased toward basic and acidic residues. The span at 452-476 (YDNSQSQYNYTAPPVSSISSEQAHV) shows a compositional bias: polar residues. Low complexity predominate over residues 494–512 (PRSAAAPQAYYQQAYSTSP). The span at 513–563 (RSATHQSTSNLYNVMSNDRGSTTNGSANGDVYSQSTDLSNGYATPVTNGNA) shows a compositional bias: polar residues. The tract at residues 566–588 (KRGRDDDDDRSSSSGQMDLKRRK) is nuclear localization domain.

This sequence belongs to the EFG1/PHD1/stuA family.

It is found in the nucleus. Transcription factor that regulates asexual reproduction. Binds the StuA-response elements (StRE) with the consensus sequence 5'-(A/T)CGCG(T/A)N(A/C)-3' at the promoters of target genes. Required for appressorium-mediated infection of rice leaves due to its involvement in the mobilization of lipids and glycogen. This is Cell pattern formation-associated protein STU1 from Pyricularia oryzae (strain 70-15 / ATCC MYA-4617 / FGSC 8958) (Rice blast fungus).